The sequence spans 293 residues: Extracellular metalloprotease MGYG_00389 (293 aa).

The signal sequence occupies residues 1–19; the sequence is MRFSVFLPAIAALSSAVAA. N-linked (GlcNAc...) asparagine glycans are attached at residues N49 and N53. H184 contributes to the Zn(2+) binding site. E185 is an active-site residue. Residue H188 coordinates Zn(2+). Residues C223 and C249 are joined by a disulfide bond. The segment at 270–293 is disordered; that stretch reads GSGSGSVTRPRPKPPVLMDYEHRL.

It belongs to the peptidase M43B family.

Its subcellular location is the secreted. Its function is as follows. Secreted metalloproteinase that allows assimilation of proteinaceous substrates. Plays a pivotal role as a pathogenicity determinant during infections and contributes to the ability of the pathogen to persist within the mammalian host. The protein is Extracellular metalloprotease MGYG_00389 of Arthroderma gypseum (strain ATCC MYA-4604 / CBS 118893) (Microsporum gypseum).